The primary structure comprises 681 residues: PTS system glucose-specific EIICBA component (681 aa).

Residues 3-414 form the PTS EIIC type-1 domain; it reads KKLFGQLQRI…LKYKTPGRED (412 aa). Helical transmembrane passes span 16-36, 73-93, 126-146, 170-190, 199-219, 273-293, 303-323, 328-348, 355-375, and 383-403; these read LMLPVAILPAAGLLLAIGTAM, MIFALGVAIGLAGGDGVAAIA, ILGIPTLQTGVFGGIIIGALA, FVPIMMATTSFILAFPMALIW, AFSTGLLDSNTGVAVFLFGFI, FMQGEFPVMMFGLPAAALAIY, VVAGLMGSAALTSFLTGITEP, FLFVAPLLFFIHAVLDGLSFL, LHLGYTFSGGFIDYFLLGILP, and VIPVGLVYAVIYYFVFRFLIV. Positions 425–506 constitute a PTS EIIB type-1 domain; sequence TELPYAVLEA…QQIMNGQVVE (82 aa). Residue Cys-447 is the Phosphocysteine intermediate; for EIIB activity of the active site. One can recognise a PTS EIIA type-1 domain in the interval 551–655; it reads DQVFSEKMMG…SDITPIIVTQ (105 aa). His-603 acts as the Tele-phosphohistidine intermediate; for EIIA activity in catalysis.

It localises to the cell membrane. It catalyses the reaction N(pros)-phospho-L-histidyl-[protein] + D-glucose(out) = D-glucose 6-phosphate(in) + L-histidyl-[protein]. The phosphoenolpyruvate-dependent sugar phosphotransferase system (sugar PTS), a major carbohydrate active transport system, catalyzes the phosphorylation of incoming sugar substrates concomitantly with their translocation across the cell membrane. This system is involved in glucose transport. The polypeptide is PTS system glucose-specific EIICBA component (ptsG) (Staphylococcus aureus (strain MRSA252)).